The sequence spans 613 residues: DNA mismatch repair protein MutL (613 aa).

Residues 364 to 393 form a disordered region; sequence EPAVARQPEAPRYSSGASAPRPTGANYPHA.

It belongs to the DNA mismatch repair MutL/HexB family.

In terms of biological role, this protein is involved in the repair of mismatches in DNA. It is required for dam-dependent methyl-directed DNA mismatch repair. May act as a 'molecular matchmaker', a protein that promotes the formation of a stable complex between two or more DNA-binding proteins in an ATP-dependent manner without itself being part of a final effector complex. This is DNA mismatch repair protein MutL from Enterobacter sp. (strain 638).